The sequence spans 396 residues: Subtilisin-like protease 5 (396 aa).

A signal peptide spans 1 to 20 (MTGFFTILSFSLAALSVTNA). The propeptide occupies 21–116 (AQILSVPKGA…VEPDAIISQH (96 aa)). In terms of domain architecture, Inhibitor I9 spans 37 to 113 (YIVVMKDDTS…VAFVEPDAII (77 aa)). Residues 125 to 396 (PWGLSRLSNR…SRLLYNGSGR (272 aa)) enclose the Peptidase S8 domain. Residues aspartate 156 and histidine 187 each act as charge relay system in the active site. Asparagine 230 and asparagine 248 each carry an N-linked (GlcNAc...) asparagine glycan. Serine 342 functions as the Charge relay system in the catalytic mechanism. Positions 376 to 389 (PTIRNPGPDTTSRL) are enriched in polar residues. The tract at residues 376 to 396 (PTIRNPGPDTTSRLLYNGSGR) is disordered. An N-linked (GlcNAc...) asparagine glycan is attached at asparagine 392.

It belongs to the peptidase S8 family.

Its subcellular location is the secreted. Functionally, secreted subtilisin-like serine protease with keratinolytic activity that contributes to pathogenicity. The sequence is that of Subtilisin-like protease 5 (SUB5) from Arthroderma benhamiae (strain ATCC MYA-4681 / CBS 112371) (Trichophyton mentagrophytes).